A 263-amino-acid chain; its full sequence is Lens fiber major intrinsic protein (263 aa).

The Cytoplasmic segment spans residues 1–9 (MWELRSASF). A helical transmembrane segment spans residues 10 to 29 (WRAIFAEFFATLFYVFFGLG). Topologically, residues 30–41 (SSLRWAPGPLHV) are extracellular. The chain crosses the membrane as a helical span at residues 42–59 (LQVALAFGLALATLVQTV). Over 60–61 (GH) the chain is Cytoplasmic. An intramembrane region (discontinuously helical) is located at residues 62 to 77 (ISGAHVNPAVTFAFLV). An NPA 1 motif is present at residues 68-70 (NPA). The Cytoplasmic portion of the chain corresponds to 78-82 (GSQMS). Residues 83 to 106 (LLRAFCYIAAQLLGAVAGAAVLYS) form a helical membrane-spanning segment. Residues 107-127 (VTPPAVRGNLALNTLHAGVSV) lie on the Extracellular side of the membrane. The chain crosses the membrane as a helical span at residues 128 to 148 (GQATTVEIFLTLQFVLCIFAT). Residues 149-156 (YDERRNGR) are Cytoplasmic-facing. The helical transmembrane segment at 157–175 (MGSVALAVGFSLTLGHLFG) threads the bilayer. Residues 176–178 (MYY) lie on the Extracellular side of the membrane. The segment at residues 179 to 193 (TGAGMNPARSFAPAI) is an intramembrane region (discontinuously helical). The NPA 2 signature appears at 184–186 (NPA). The Extracellular portion of the chain corresponds to 194–200 (LTRNFSN). Residues 201-222 (HWVYWVGPIIGGGLGSLLYDFL) form a helical membrane-spanning segment. Over 223 to 263 (LFPRLKSVSERLSILKGARPSDSNGQPEGTGEPVELKTQAL) the chain is Cytoplasmic. The segment at 227–237 (LKSVSERLSIL) is interaction with CALM. Phosphoserine is present on residues serine 235, serine 243, and serine 245. The disordered stretch occupies residues 240–263 (ARPSDSNGQPEGTGEPVELKTQAL). Asparagine 246 is modified (deamidated asparagine).

The protein belongs to the MIP/aquaporin (TC 1.A.8) family. Homotetramer; each monomer provides an independent water pore. Two homotetramers on opposing membranes can dimerize, forming a cell-cell junction. Interacts with CALM; the calcium-calmodulin/CALM complex interacts with the cytoplasmic domains of two aquaporins, leading to channel closure. Interacts with BFSP1 (via C-terminus); prevents calcium-dependent inhibition of the water channel activity. Subject to partial proteolytic cleavage in the eye lens core. Partial proteolysis promotes interactions between tetramers from adjoining membranes. In terms of processing, fatty acylated at Met-1 and Lys-238. The acyl modifications, in decreasing order of ion abundance, are: oleoyl (C18:1) &gt; palmitoyl (C16:0) &gt; stearoyl (C18:0) &gt; eicosenoyl (C20:1) &gt; dihomo-gamma-linolenoyl (C20:3) &gt; palmitoleoyl (C16:1) &gt; eicosadienoyl (C20:2).

Its subcellular location is the cell membrane. It localises to the cell junction. It carries out the reaction H2O(in) = H2O(out). The water channel activity is inhibited by calcium through calmodulin/CALM. In terms of biological role, aquaporins form homotetrameric transmembrane channels, with each monomer independently mediating water transport across the plasma membrane along its osmotic gradient. Specifically expressed in lens fiber cells, this aquaporin is crucial for maintaining lens water homeostasis and transparency. Beyond water permeability, it also acts as a cell-to-cell adhesion molecule, forming thin junctions between lens fiber cells that are essential for maintaining the ordered structure and transparency of the lens. The sequence is that of Lens fiber major intrinsic protein from Rattus norvegicus (Rat).